A 300-amino-acid polypeptide reads, in one-letter code: uncharacterized protein (300 aa).

3 Solcar repeats span residues 10 to 101, 119 to 199, and 212 to 294; these read ESQT…VKDF, GKAI…AKEY, and FQNF…LIPF. 6 helical membrane passes run 16–36, 70–86, 121–141, 178–198, 215–235, and 275–295; these read IVGSASAGILELSLFHPVDTI, ATSLFPGLGYAACYKIV, AIMHATAGSIVGIGEIFLLPL, TAARNAPGSFALFGGNAFAKE, FFTSIAGASASLIVSAPLDVI, and LTTGPKLVFSFTMAQTLIPFF.

This sequence belongs to the mitochondrial carrier (TC 2.A.29) family.

The protein resides in the mitochondrion inner membrane. This is an uncharacterized protein from Schizosaccharomyces pombe (strain 972 / ATCC 24843) (Fission yeast).